A 140-amino-acid chain; its full sequence is MRHGMSGRKLNRDKSARKALFVSLANALLKHEQIKTTLPKAKDARPIVEKLITLGKRGDLHARRQAYAFLRDDKVVAKLFAVIGPRYKERQGGYCRVLKAGFRYGDCAPMAIIELVDRDLAAKGTDSGPTADKKADADEE.

The protein belongs to the bacterial ribosomal protein bL17 family. As to quaternary structure, part of the 50S ribosomal subunit. Contacts protein L32.

This Paramagnetospirillum magneticum (strain ATCC 700264 / AMB-1) (Magnetospirillum magneticum) protein is Large ribosomal subunit protein bL17.